We begin with the raw amino-acid sequence, 148 residues long: Probable 4-amino-4-deoxy-L-arabinose-phosphoundecaprenol flippase subunit ArnF (148 aa).

Residues 1-23 are Cytoplasmic-facing; it reads MRGDNTGVGKEPAVTERPAIKGY. The helical transmembrane segment at 24-44 threads the bilayer; it reads LYVLGSILLVTLAQLAMKWGV. Topologically, residues 45-63 are periplasmic; it reads MQLPAWQASLDIMLAHPVP. The chain crosses the membrane as a helical span at residues 64–84; the sequence is LLVITAGVGCYALSLLCWLAA. Residues 85-91 lie on the Cytoplasmic side of the membrane; sequence LHFTPLN. Residues 92 to 112 form a helical membrane-spanning segment; it reads IAYPLLSTSYALVYLLAVSIP. Over 113–117 the chain is Periplasmic; the sequence is SFAEP. A helical membrane pass occupies residues 118–138; that stretch reads LEPGKAVGVIFILLGAVLVGI. Residues 139-148 lie on the Cytoplasmic side of the membrane; it reads KPVGRKRNAH.

This sequence belongs to the ArnF family. As to quaternary structure, heterodimer of ArnE and ArnF.

It is found in the cell inner membrane. It functions in the pathway bacterial outer membrane biogenesis; lipopolysaccharide biosynthesis. Its function is as follows. Translocates 4-amino-4-deoxy-L-arabinose-phosphoundecaprenol (alpha-L-Ara4N-phosphoundecaprenol) from the cytoplasmic to the periplasmic side of the inner membrane. The protein is Probable 4-amino-4-deoxy-L-arabinose-phosphoundecaprenol flippase subunit ArnF of Aeromonas salmonicida (strain A449).